The sequence spans 132 residues: Holo-[acyl-carrier-protein] synthase (132 aa).

Residues Asp-8 and Glu-62 each coordinate Mg(2+).

The protein belongs to the P-Pant transferase superfamily. AcpS family. Mg(2+) serves as cofactor.

Its subcellular location is the cytoplasm. It catalyses the reaction apo-[ACP] + CoA = holo-[ACP] + adenosine 3',5'-bisphosphate + H(+). Transfers the 4'-phosphopantetheine moiety from coenzyme A to a Ser of acyl-carrier-protein. The sequence is that of Holo-[acyl-carrier-protein] synthase from Polaromonas sp. (strain JS666 / ATCC BAA-500).